A 489-amino-acid polypeptide reads, in one-letter code: Mitogen-activated protein kinase adapter protein MST50 (489 aa).

A disordered region spans residues 1–56; sequence MSFNTGTAYAESDADDEYERDIHDSSPIDATDAEASPTESDPPSNEHTPTTYGYRS. The segment covering 37–54 has biased composition (polar residues); that stretch reads PTESDPPSNEHTPTTYGY. The region spanning 69–132 is the SAM domain; the sequence is WTADECADFI…LRSVYDVKKA (64 aa). Disordered regions lie at residues 207 to 285 and 309 to 379; these read PLPH…AAER and SINI…GSNA. Composition is skewed to polar residues over residues 256–265 and 328–346; these read PKATSPTHLQ and ASRS…STFA. The Ras-associating domain occupies 377 to 457; sequence SNASVEIFKS…PMFMLRKTNN (81 aa).

In terms of assembly, interacts with MST7 and MST11. Interacts with MCK1, MKK2 and HIK1.

Functionally, mitogen-activated protein kinase adapter protein; part of the MST11-MST7-PMK1 MAP kinase (MAPK) cascade that is essential for appressorium formation, penetration and invasive growth. Binds to the MAPKKK MST11 and the MAPKK MST7 to maintain the stability of the MST11-MST7 complex for the phosphorylation of the MAPK PMK1. Is also involved in the MPS1 and OSM1 MAPK pathways, and especially plays a role in the activation of MPS1 in response to cell wall stress. Its function differs in the 3 MAPK pathways. The protein is Mitogen-activated protein kinase adapter protein MST50 of Pyricularia oryzae (strain 70-15 / ATCC MYA-4617 / FGSC 8958) (Rice blast fungus).